Here is an 82-residue protein sequence, read N- to C-terminus: DNA-directed RNA polymerase subunit omega (82 aa).

Belongs to the RNA polymerase subunit omega family. As to quaternary structure, in cyanobacteria the RNAP catalytic core is composed of 2 alpha, 1 beta, 1 beta', 1 gamma and 1 omega subunit. When a sigma factor is associated with the core the holoenzyme is formed, which can initiate transcription.

It carries out the reaction RNA(n) + a ribonucleoside 5'-triphosphate = RNA(n+1) + diphosphate. In terms of biological role, promotes RNA polymerase assembly. Latches the N- and C-terminal regions of the beta' subunit thereby facilitating its interaction with the beta and alpha subunits. The sequence is that of DNA-directed RNA polymerase subunit omega from Trichodesmium erythraeum (strain IMS101).